The sequence spans 193 residues: MTLFTENDLLNNSYKSIQKSYHFSENQAAKNILEQAYKNYDKNKIYDIFLSHSFLDARKILGLKNYIEGLGYSVYVDWIEDKQLDRSKVSKETAGILRERMQSCKSLFFAISENSDHSLWMPWELGYFDGIKQKVAILPVLKSSYDDSYNGQEYLGLYPYVAKGTIINSTQEEIWIHSSQKQYVRFRNWLQQN.

In terms of assembly, homodimer.

The enzyme catalyses NAD(+) = 3'cADPR + nicotinamide + H(+). In terms of biological role, TIR-like domain-containing component of the Thoeris antiviral defense system, composed of ThsA and ThsB and ThsB'. In the presence of NAD(+) produces a signaling molecule that activates cognate ThsA (AC J8G6Z1) to hydrolyze NAD(+). The signaling molecule is a cyclic ADP-D-ribose isomer and may be 3' cyclic ADP-D-ribose (3'cADPR); it is not 2'cADPR. The chain is Probable 3' cyclic ADP-D-ribose synthase ThsB' from Bacillus cereus (strain MSX-D12).